A 347-amino-acid chain; its full sequence is Heat-inducible transcription repressor HrcA (347 aa).

Belongs to the HrcA family.

Its function is as follows. Negative regulator of class I heat shock genes (grpE-dnaK-dnaJ and groELS operons). Prevents heat-shock induction of these operons. This chain is Heat-inducible transcription repressor HrcA, found in Lactococcus lactis subsp. cremoris (strain SK11).